The following is a 616-amino-acid chain: MALLQIAEPGQSSAPHQHKLAAGIDLGTTNSLVASVRSGTASTLVDSQGRSILPSVVNYGADATRVGYPAREQAETDPHNTVISVKRLLGRSLQDINQRYPHLPYRFKASEKGLPIVQTAQGDKNPIQISADILKALAERATATLGGELAGVVITVPAYFDDAQRVATKDAAALAGLHVLRLLNEPTAAAIAYGLDSGQEGVIAVYDLGGGTFDISILRLSRGVFEVLATGGDSALGGDDFDHLIADHLQAQIGLTSLTAEQQRALINAATQAKIDLTEYMTAELNVLGWQGSLTREELENLIAPLLKKTLLSCRRALKDAGVEADEVLEVVMVGGSTRTPFVREQVGEFFGRTPLTSINPDEVVAIGAAIQADILAGNKPDAEMLLLDVIPLSLGIETMGGLVEKIIPRNTTIPVARAQEFTTFKDGQTAMSVHVVQGEREMVDDCRSLARFSLKGIPPMAAGAAHIRVTYQVDADGLLSVTALEKSTGVQAEIQVKPSYGLSDDEVTQMLKDSMAYAKEDMLARALAEQRVEADRVIEGLVSALQADGDELLNEQERQTLLQAIERLIELRNGDNADAIEQGIKDTDKASQDFASRRMDKSIRSALAGHSVDEI.

Belongs to the heat shock protein 70 family.

Functionally, probable chaperone. Has a low intrinsic ATPase activity which is markedly stimulated by HscB. This chain is Chaperone protein HscA homolog, found in Vibrio cholerae serotype O1 (strain ATCC 39315 / El Tor Inaba N16961).